A 272-amino-acid polypeptide reads, in one-letter code: Shikimate dehydrogenase (NADP(+)) (272 aa).

Shikimate is bound by residues 14-16 and Thr61; that span reads SLS. The active-site Proton acceptor is Lys65. Asp102 lines the shikimate pocket. Residues 127 to 131, 151 to 156, and Leu215 each bind NADP(+); these read GAGGA and NRTPSK. Tyr217 is a binding site for shikimate. Gly239 serves as a coordination point for NADP(+).

This sequence belongs to the shikimate dehydrogenase family. Homodimer.

The catalysed reaction is shikimate + NADP(+) = 3-dehydroshikimate + NADPH + H(+). It functions in the pathway metabolic intermediate biosynthesis; chorismate biosynthesis; chorismate from D-erythrose 4-phosphate and phosphoenolpyruvate: step 4/7. Its function is as follows. Involved in the biosynthesis of the chorismate, which leads to the biosynthesis of aromatic amino acids. Catalyzes the reversible NADPH linked reduction of 3-dehydroshikimate (DHSA) to yield shikimate (SA). The chain is Shikimate dehydrogenase (NADP(+)) from Coxiella burnetii (strain CbuG_Q212) (Coxiella burnetii (strain Q212)).